The primary structure comprises 285 residues: Phosphoribosylaminoimidazole-succinocarboxamide synthase (285 aa).

It belongs to the SAICAR synthetase family.

It catalyses the reaction 5-amino-1-(5-phospho-D-ribosyl)imidazole-4-carboxylate + L-aspartate + ATP = (2S)-2-[5-amino-1-(5-phospho-beta-D-ribosyl)imidazole-4-carboxamido]succinate + ADP + phosphate + 2 H(+). Its pathway is purine metabolism; IMP biosynthesis via de novo pathway; 5-amino-1-(5-phospho-D-ribosyl)imidazole-4-carboxamide from 5-amino-1-(5-phospho-D-ribosyl)imidazole-4-carboxylate: step 1/2. The protein is Phosphoribosylaminoimidazole-succinocarboxamide synthase of Leptospira interrogans serogroup Icterohaemorrhagiae serovar copenhageni (strain Fiocruz L1-130).